A 380-amino-acid polypeptide reads, in one-letter code: Erythronate-4-phosphate dehydrogenase (380 aa).

Serine 45 and threonine 66 together coordinate substrate. An intrachain disulfide couples cysteine 65 to cysteine 90. NAD(+)-binding positions include 126-127, aspartate 146, threonine 175, 206-208, and aspartate 232; these read QV and ASR. Arginine 208 is a catalytic residue. Glutamate 237 is an active-site residue. Histidine 254 (proton donor) is an active-site residue. Glycine 257 serves as a coordination point for NAD(+). Residue tyrosine 258 participates in substrate binding.

It belongs to the D-isomer specific 2-hydroxyacid dehydrogenase family. PdxB subfamily. As to quaternary structure, homodimer.

It is found in the cytoplasm. The catalysed reaction is 4-phospho-D-erythronate + NAD(+) = (R)-3-hydroxy-2-oxo-4-phosphooxybutanoate + NADH + H(+). Its pathway is cofactor biosynthesis; pyridoxine 5'-phosphate biosynthesis; pyridoxine 5'-phosphate from D-erythrose 4-phosphate: step 2/5. Its function is as follows. Catalyzes the oxidation of erythronate-4-phosphate to 3-hydroxy-2-oxo-4-phosphonooxybutanoate. The protein is Erythronate-4-phosphate dehydrogenase of Pseudomonas aeruginosa (strain ATCC 15692 / DSM 22644 / CIP 104116 / JCM 14847 / LMG 12228 / 1C / PRS 101 / PAO1).